The primary structure comprises 376 residues: Queuine tRNA-ribosyltransferase (376 aa).

The Proton acceptor role is filled by aspartate 93. Substrate contacts are provided by residues 93–97 (DSGGF), aspartate 147, glutamine 190, and glycine 217. Positions 248-254 (GVGKPDD) are RNA binding. Aspartate 267 (nucleophile) is an active-site residue. 4 residues coordinate Zn(2+): cysteine 305, cysteine 307, cysteine 310, and histidine 336.

The protein belongs to the queuine tRNA-ribosyltransferase family. As to quaternary structure, homodimer. Within each dimer, one monomer is responsible for RNA recognition and catalysis, while the other monomer binds to the replacement base PreQ1. Zn(2+) serves as cofactor.

The catalysed reaction is 7-aminomethyl-7-carbaguanine + guanosine(34) in tRNA = 7-aminomethyl-7-carbaguanosine(34) in tRNA + guanine. Its pathway is tRNA modification; tRNA-queuosine biosynthesis. In terms of biological role, catalyzes the base-exchange of a guanine (G) residue with the queuine precursor 7-aminomethyl-7-deazaguanine (PreQ1) at position 34 (anticodon wobble position) in tRNAs with GU(N) anticodons (tRNA-Asp, -Asn, -His and -Tyr). Catalysis occurs through a double-displacement mechanism. The nucleophile active site attacks the C1' of nucleotide 34 to detach the guanine base from the RNA, forming a covalent enzyme-RNA intermediate. The proton acceptor active site deprotonates the incoming PreQ1, allowing a nucleophilic attack on the C1' of the ribose to form the product. After dissociation, two additional enzymatic reactions on the tRNA convert PreQ1 to queuine (Q), resulting in the hypermodified nucleoside queuosine (7-(((4,5-cis-dihydroxy-2-cyclopenten-1-yl)amino)methyl)-7-deazaguanosine). In Ruegeria sp. (strain TM1040) (Silicibacter sp.), this protein is Queuine tRNA-ribosyltransferase.